The chain runs to 588 residues: Arginine--tRNA ligase (588 aa).

Residues 126 to 136 carry the 'HIGH' region motif; it reads PNIAKEMHVGH.

This sequence belongs to the class-I aminoacyl-tRNA synthetase family. As to quaternary structure, monomer.

It localises to the cytoplasm. It carries out the reaction tRNA(Arg) + L-arginine + ATP = L-arginyl-tRNA(Arg) + AMP + diphosphate. The polypeptide is Arginine--tRNA ligase (Nostoc sp. (strain PCC 7120 / SAG 25.82 / UTEX 2576)).